The sequence spans 848 residues: Neuroligin-3 (848 aa).

Residues 1–37 (MWLQLGLPSLSLSPTPTVGRSLCLILWFLSLVLRAST) form the signal peptide. Over 38 to 709 (QAPAPTVNTH…NPRDYSTELS (672 aa)) the chain is Extracellular. A glycan (N-linked (GlcNAc...) asparagine) is linked at asparagine 98. The cysteines at positions 106 and 141 are disulfide-linked. Positions 169 to 195 (CRKGGSGAKKQGEDLADNDGDEDEDIR) are disordered. A compositionally biased stretch (acidic residues) spans 182-194 (DLADNDGDEDEDI). 2 cysteine pairs are disulfide-bonded: cysteine 340–cysteine 351 and cysteine 510–cysteine 544. N-linked (GlcNAc...) asparagine glycosylation occurs at asparagine 545. 2 stretches are compositionally biased toward polar residues: residues 645–656 (TKVPPPDTTHSS) and 677–689 (AYSNENAPGSWNG). The disordered stretch occupies residues 645-691 (TKVPPPDTTHSSHITRRPNGKTWSTKRPAISPAYSNENAPGSWNGDQ). A helical transmembrane segment spans residues 710 to 730 (VTIAVGASLLFLNVLAFAALY). The Cytoplasmic segment spans residues 731-848 (YRKDKRRQEP…LPNSHSTTRV (118 aa)). Serine 745 bears the Phosphoserine mark. Residue tyrosine 792 is modified to Phosphotyrosine.

The protein belongs to the type-B carboxylesterase/lipase family. In terms of assembly, homodimer, and heterodimer with NLGN1 and NLGN2. Interacts with neurexins NRXN1, NRXN2 and NRXN3. Interaction with neurexins is mediated by heparan sulfate glycan modification on neurexin. Interacts (via its C-terminus) with DLG4/PSD-95 (via PDZ domain 3). In terms of processing, the N-terminus is blocked. In terms of tissue distribution, detected in brain and on hippocampus neurons, especially at excitatory synapses. Detected in retina (at protein level). Expressed in brain, spinal cord and dorsal root ganglion.

It localises to the cell membrane. Its subcellular location is the synapse. Its function is as follows. Cell surface protein involved in cell-cell-interactions via its interactions with neurexin family members. Plays a role in synapse function and synaptic signal transmission, and probably mediates its effects by recruiting and clustering other synaptic proteins. May promote the initial formation of synapses, but is not essential for this. May also play a role in glia-glia or glia-neuron interactions in the developing peripheral nervous system. The polypeptide is Neuroligin-3 (Nlgn3) (Rattus norvegicus (Rat)).